We begin with the raw amino-acid sequence, 210 residues long: uncharacterized protein (210 aa).

This is an uncharacterized protein from Fowl adenovirus A serotype 1 (strain CELO / Phelps) (FAdV-1).